Reading from the N-terminus, the 728-residue chain is Phosphoribosylformylglycinamidine synthase subunit PurL (728 aa).

Histidine 42 is an active-site residue. ATP-binding residues include tyrosine 45 and lysine 84. Position 86 (glutamate 86) interacts with Mg(2+). Residues serine 87–histidine 90 and arginine 109 each bind substrate. Histidine 88 functions as the Proton acceptor in the catalytic mechanism. Aspartate 110 lines the Mg(2+) pocket. Residue glutamine 237 participates in substrate binding. Aspartate 265 lines the Mg(2+) pocket. Glutamate 309–glutamine 311 contributes to the substrate binding site. ATP-binding residues include aspartate 491 and glycine 528. Position 529 (asparagine 529) interacts with Mg(2+). Serine 531 serves as a coordination point for substrate.

The protein belongs to the FGAMS family. In terms of assembly, monomer. Part of the FGAM synthase complex composed of 1 PurL, 1 PurQ and 2 PurS subunits.

It localises to the cytoplasm. It carries out the reaction N(2)-formyl-N(1)-(5-phospho-beta-D-ribosyl)glycinamide + L-glutamine + ATP + H2O = 2-formamido-N(1)-(5-O-phospho-beta-D-ribosyl)acetamidine + L-glutamate + ADP + phosphate + H(+). Its pathway is purine metabolism; IMP biosynthesis via de novo pathway; 5-amino-1-(5-phospho-D-ribosyl)imidazole from N(2)-formyl-N(1)-(5-phospho-D-ribosyl)glycinamide: step 1/2. Part of the phosphoribosylformylglycinamidine synthase complex involved in the purines biosynthetic pathway. Catalyzes the ATP-dependent conversion of formylglycinamide ribonucleotide (FGAR) and glutamine to yield formylglycinamidine ribonucleotide (FGAM) and glutamate. The FGAM synthase complex is composed of three subunits. PurQ produces an ammonia molecule by converting glutamine to glutamate. PurL transfers the ammonia molecule to FGAR to form FGAM in an ATP-dependent manner. PurS interacts with PurQ and PurL and is thought to assist in the transfer of the ammonia molecule from PurQ to PurL. The sequence is that of Phosphoribosylformylglycinamidine synthase subunit PurL from Campylobacter jejuni subsp. doylei (strain ATCC BAA-1458 / RM4099 / 269.97).